A 60-amino-acid polypeptide reads, in one-letter code: Conotoxin Cal6.30 (60 aa).

The signal sequence occupies residues 1-22 (MKVTCVLTLAVLILTIGQIANA). 3 cysteine pairs are disulfide-bonded: Cys-31-Cys-47, Cys-38-Cys-51, and Cys-46-Cys-55.

As to expression, expressed by the venom duct.

The protein resides in the secreted. In terms of biological role, probable neurotoxin. This Californiconus californicus (California cone) protein is Conotoxin Cal6.30.